The following is a 156-amino-acid chain: Small ribosomal subunit protein uS7 (156 aa).

The protein belongs to the universal ribosomal protein uS7 family. As to quaternary structure, part of the 30S ribosomal subunit. Contacts proteins S9 and S11.

Its function is as follows. One of the primary rRNA binding proteins, it binds directly to 16S rRNA where it nucleates assembly of the head domain of the 30S subunit. Is located at the subunit interface close to the decoding center, probably blocks exit of the E-site tRNA. This chain is Small ribosomal subunit protein uS7, found in Mycobacterium avium (strain 104).